A 313-amino-acid polypeptide reads, in one-letter code: Protein TIFY 4A (313 aa).

The interval 118–149 (SPRSAEFSGGSGHFVSEKDGHKTTISPRSPAE) is disordered. The region spanning 150 to 185 (TSELVGQMTIFYSGKVNVYDGIPPEKARSIMHFAAN) is the Tify domain. Disordered stretches follow at residues 220 to 256 (KANSSRDSGMEGQANRKVSLQRYREKRKDRKFSKAKK) and 281 to 313 (QNLGCTGSPLHSQSPESQTKSPNLSVDLNSEGI). Positions 232–254 (QANRKVSLQRYREKRKDRKFSKA) match the Jas motif. The short motif at 234 to 241 (NRKVSLQR) is the Nuclear localization signal element. Basic residues predominate over residues 243 to 256 (REKRKDRKFSKAKK).

The protein belongs to the TIFY/JAZ family. As to quaternary structure, interacts with AFPH2/NINJA.

Its subcellular location is the nucleus. Functionally, regulates the arrest of dispersed meristematic cells during lamina development. The chain is Protein TIFY 4A (TIFY4A) from Arabidopsis thaliana (Mouse-ear cress).